A 110-amino-acid polypeptide reads, in one-letter code: Progonadoliberin-2 (110 aa).

The signal sequence occupies residues 1-26 (MASIGQGLVLLLLLLLLTAQPGPLKA). The disordered stretch occupies residues 25–85 (KAQHWSHGWY…KALAPPEDTV (61 aa)). Glycine amide is present on G36.

This sequence belongs to the GnRH family. In terms of tissue distribution, midbrain.

The protein localises to the secreted. Stimulates the secretion of gonadotropins; it stimulates the secretion of both luteinizing and follicle-stimulating hormones. The sequence is that of Progonadoliberin-2 (GNRH2) from Suncus murinus (Asian house shrew).